A 268-amino-acid chain; its full sequence is tRNA pseudouridine synthase A (268 aa).

Asp54 acts as the Nucleophile in catalysis. Residue Tyr112 coordinates substrate.

Belongs to the tRNA pseudouridine synthase TruA family. In terms of assembly, homodimer.

It carries out the reaction uridine(38/39/40) in tRNA = pseudouridine(38/39/40) in tRNA. Its function is as follows. Formation of pseudouridine at positions 38, 39 and 40 in the anticodon stem and loop of transfer RNAs. The protein is tRNA pseudouridine synthase A of Bordetella petrii (strain ATCC BAA-461 / DSM 12804 / CCUG 43448).